Consider the following 368-residue polypeptide: Probable endopolygalacturonase A (368 aa).

Positions 1–18 (MRSVELLSLAALGSLVAA) are cleaved as a signal peptide. Positions 19–31 (APAPSRVSDLTKR) are excised as a propeptide. Residues Cys-35 and Cys-50 are joined by a disulfide bond. PbH1 repeat units lie at residues 140–162 (LEDS…SVQA), 167–192 (LIDI…DISE), 193–214 (STGV…AINS), 215–235 (GENI…SIGS), 244–265 (VKNV…RIKT), 273–295 (VSEV…VIEQ), and 307–352 (TTGV…DITG). Catalysis depends on Asp-207, which acts as the Proton donor. Cysteines 209 and 225 form a disulfide. His-229 is an active-site residue. The N-linked (GlcNAc...) asparagine glycan is linked to Asn-246. Cystine bridges form between Cys-335-Cys-340 and Cys-359-Cys-368.

This sequence belongs to the glycosyl hydrolase 28 family.

It localises to the secreted. The enzyme catalyses (1,4-alpha-D-galacturonosyl)n+m + H2O = (1,4-alpha-D-galacturonosyl)n + (1,4-alpha-D-galacturonosyl)m.. Its function is as follows. Involved in maceration and soft-rotting of plant tissue. Hydrolyzes the 1,4-alpha glycosidic bonds of de-esterified pectate in the smooth region of the plant cell wall. The chain is Probable endopolygalacturonase A (pgaA) from Neosartorya fischeri (strain ATCC 1020 / DSM 3700 / CBS 544.65 / FGSC A1164 / JCM 1740 / NRRL 181 / WB 181) (Aspergillus fischerianus).